A 121-amino-acid polypeptide reads, in one-letter code: MARIAGIDIPREKRVEIALTYIYGIGLTRSKLILSNTGVNPDIRVKDLSDSDVQKLRVAAEDFTVEGDLRRQEGMALKRLQDIGCVRGRRHRMSLPVRGQRTRTNARTRRGSRKTVAGRKK.

Residues 91–121 (HRMSLPVRGQRTRTNARTRRGSRKTVAGRKK) are disordered. Residues 100–121 (QRTRTNARTRRGSRKTVAGRKK) are compositionally biased toward basic residues.

The protein belongs to the universal ribosomal protein uS13 family. In terms of assembly, part of the 30S ribosomal subunit. Forms a loose heterodimer with protein S19. Forms two bridges to the 50S subunit in the 70S ribosome.

Its function is as follows. Located at the top of the head of the 30S subunit, it contacts several helices of the 16S rRNA. In the 70S ribosome it contacts the 23S rRNA (bridge B1a) and protein L5 of the 50S subunit (bridge B1b), connecting the 2 subunits; these bridges are implicated in subunit movement. Contacts the tRNAs in the A and P-sites. This chain is Small ribosomal subunit protein uS13, found in Prochlorococcus marinus (strain MIT 9515).